The primary structure comprises 261 residues: Methyl jasmonate esterase 1 (261 aa).

Residues 8 to 251 (FVLVHGACHG…MFSKPLDLCA (244 aa)) form the AB hydrolase-1 domain. Ser82 (acyl-ester intermediate) is an active-site residue. Residues Asp211 and His239 each act as charge relay system in the active site.

Belongs to the AB hydrolase superfamily. Methylesterase family. As to quaternary structure, homodimer.

The catalysed reaction is methyl (-)-jasmonate + H2O = jasmonate + methanol + H(+). The enzyme catalyses methyl salicylate + H2O = salicylate + methanol + H(+). Its pathway is plant hormone biosynthesis. It participates in lipid metabolism; oxylipin biosynthesis. Methylesterase that catalyzes the hydrolysis of methyl jasmonate (MeJA) into jasmonate (JA). Can also use methyl salicylate (MeSA) as substrate with a lower efficiency. The protein is Methyl jasmonate esterase 1 of Vitis vinifera (Grape).